Reading from the N-terminus, the 63-residue chain is Large ribosomal subunit protein uL29 (63 aa).

This sequence belongs to the universal ribosomal protein uL29 family.

The polypeptide is Large ribosomal subunit protein uL29 (Shigella dysenteriae serotype 1 (strain Sd197)).